A 275-amino-acid chain; its full sequence is Peptidoglycan-N-acetylglucosamine deacetylase BC_1960 (275 aa).

The region spanning 81–262 is the NodB homology domain; that stretch reads AEVALTFDDG…QLKTKGARFV (182 aa). Catalysis depends on aspartate 88, which acts as the Proton acceptor. Residues aspartate 89, histidine 139, and histidine 143 each contribute to the Zn(2+) site. Position 179 is a 2-hydroxyproline; partial (proline 179). The active-site Proton donor is the histidine 233.

It belongs to the polysaccharide deacetylase family. Zn(2+) is required as a cofactor. Hydroxylated on Pro-179. Hydroxylation alters the active site and enhances significantly deacetylase activity, probably by creating a more favorable environment for transition-state stabilization. It might be autocatalytic.

The catalysed reaction is peptidoglycan-N-acetyl-D-glucosamine + H2O = peptidoglycan-D-glucosamine + acetate.. With respect to regulation, deacetylase activity is stimulated by hydroxylation on Pro-179. Inhibited by CuCl(2) and ZnCl(2). Inhibited by the hydroxamate N-hydroxy-4-(naphthalene-1-yl)benzamide (NHNB). Its function is as follows. Catalyzes the deacetylation of N-acetylglucosamine (GlcNAc) residues in peptidoglycan. Also acts on soluble chitin substrates and N-acetylchitooligomers. Acts on cell wall peptidoglycan from the Gram-positive bacteria B.cereus and B.subtilis and the Gram-negative bacterium H.pylori. Not active on acetylated xylan. The sequence is that of Peptidoglycan-N-acetylglucosamine deacetylase BC_1960 from Bacillus cereus (strain ATCC 14579 / DSM 31 / CCUG 7414 / JCM 2152 / NBRC 15305 / NCIMB 9373 / NCTC 2599 / NRRL B-3711).